A 449-amino-acid chain; its full sequence is MLSSQTSSIFTVSRLNQTVRLLLEQEMGQVWISGEISNFTQPASGHWYFTLKDDTAQVRCAMFRNSNRRVTFRPQHGQQVLVRANITLYEPRGDYQIIAESMQPAGEGLLQQKYEQLKAKLQAEGLFDQQHKQQLPSPAHCVGVITSKTGAALHDILHVLKRRDPSLPVIIYPTAVQGDDAPGQIVRAIELANARGECDVLIVGRGGGSLEDLWSFNDERVARAIFASRIPVVSAVGHETDVTIADFVADLRAPTPSAAAEIVSRNQQELLRQIQSAQQRLGMAMDYYLANRSRRFTQIFHRLQQQHPQLRLARQQTALERLRQRMGFALEARIKQATQRQQRVSQRLSQQNPQPRIHRAQSRIQQLEYRLTENIRSRLSEQRERFGNAVTHLEAVSPLATLARGYTVSTTTDGKVLKKIKQVKAGDIMTTRLEDGWLESEVKSVTPGT.

It belongs to the XseA family. As to quaternary structure, heterooligomer composed of large and small subunits.

The protein resides in the cytoplasm. The catalysed reaction is Exonucleolytic cleavage in either 5'- to 3'- or 3'- to 5'-direction to yield nucleoside 5'-phosphates.. Bidirectionally degrades single-stranded DNA into large acid-insoluble oligonucleotides, which are then degraded further into small acid-soluble oligonucleotides. The sequence is that of Exodeoxyribonuclease 7 large subunit from Salmonella schwarzengrund (strain CVM19633).